We begin with the raw amino-acid sequence, 475 residues long: Tubulin gamma chain (475 aa).

Residue 142-148 coordinates GTP; the sequence is AGGTGSG. Residues 455–475 are disordered; the sequence is GKQVSGEGNTSGTVDSRVGAS.

This sequence belongs to the tubulin family.

The protein resides in the cytoplasm. The protein localises to the cytoskeleton. It is found in the microtubule organizing center. Tubulin is the major constituent of microtubules. The gamma chain is found at microtubule organizing centers (MTOC) such as the spindle poles, suggesting that it is involved in the minus-end nucleation of microtubule assembly. This Physcomitrium patens (Spreading-leaved earth moss) protein is Tubulin gamma chain (TUBG1).